The primary structure comprises 354 residues: Peptide chain release factor 1 (354 aa).

Glutamine 232 is modified (N5-methylglutamine).

The protein belongs to the prokaryotic/mitochondrial release factor family. In terms of processing, methylated by PrmC. Methylation increases the termination efficiency of RF1.

It is found in the cytoplasm. In terms of biological role, peptide chain release factor 1 directs the termination of translation in response to the peptide chain termination codons UAG and UAA. The sequence is that of Peptide chain release factor 1 from Jannaschia sp. (strain CCS1).